A 108-amino-acid polypeptide reads, in one-letter code: L-rhamnose mutarotase (108 aa).

A substrate-binding site is contributed by Y18. Residue H22 is the Proton donor of the active site. Substrate-binding positions include Y41 and 76–77 (WW).

Belongs to the rhamnose mutarotase family. In terms of assembly, homodimer.

It localises to the cytoplasm. The enzyme catalyses alpha-L-rhamnose = beta-L-rhamnose. The protein operates within carbohydrate metabolism; L-rhamnose metabolism. Functionally, involved in the anomeric conversion of L-rhamnose. This Paraburkholderia phymatum (strain DSM 17167 / CIP 108236 / LMG 21445 / STM815) (Burkholderia phymatum) protein is L-rhamnose mutarotase.